The sequence spans 183 residues: Ribonuclease M5 (183 aa).

The Toprim domain occupies 6–90 (KEVIVVEGKD…AYISRVSGTK (85 aa)). Mg(2+) is bound by residues E12, D59, and D61.

Belongs to the ribonuclease M5 family. It depends on Mg(2+) as a cofactor.

It localises to the cytoplasm. The enzyme catalyses Endonucleolytic cleavage of RNA, removing 21 and 42 nucleotides, respectively, from the 5'- and 3'-termini of a 5S-rRNA precursor.. Required for correct processing of both the 5' and 3' ends of 5S rRNA precursor. Cleaves both sides of a double-stranded region yielding mature 5S rRNA in one step. The polypeptide is Ribonuclease M5 (Fusobacterium nucleatum subsp. nucleatum (strain ATCC 25586 / DSM 15643 / BCRC 10681 / CIP 101130 / JCM 8532 / KCTC 2640 / LMG 13131 / VPI 4355)).